The following is a 207-amino-acid chain: Uracil phosphoribosyltransferase (207 aa).

5-phospho-alpha-D-ribose 1-diphosphate contacts are provided by residues R77, R102, and 129-137 (DPMLATGGS). Uracil contacts are provided by residues I192 and 197 to 199 (GDA). Residue D198 participates in 5-phospho-alpha-D-ribose 1-diphosphate binding.

The protein belongs to the UPRTase family. Mg(2+) is required as a cofactor.

The catalysed reaction is UMP + diphosphate = 5-phospho-alpha-D-ribose 1-diphosphate + uracil. It functions in the pathway pyrimidine metabolism; UMP biosynthesis via salvage pathway; UMP from uracil: step 1/1. Its activity is regulated as follows. Allosterically activated by GTP. Its function is as follows. Catalyzes the conversion of uracil and 5-phospho-alpha-D-ribose 1-diphosphate (PRPP) to UMP and diphosphate. This Mycoplasma capricolum subsp. capricolum (strain California kid / ATCC 27343 / NCTC 10154) protein is Uracil phosphoribosyltransferase.